We begin with the raw amino-acid sequence, 317 residues long: Cyclin-T1-3 (317 aa).

It belongs to the cyclin family. Cyclin T subfamily. In terms of assembly, interacts with CDKC-1 and CDKC-2. In terms of tissue distribution, abundantly expressed in flowers. Expressed in roots, seedlings, rosettes and stems.

The polypeptide is Cyclin-T1-3 (CYCT1-3) (Arabidopsis thaliana (Mouse-ear cress)).